A 399-amino-acid polypeptide reads, in one-letter code: Protochlorophyllide reductase, chloroplastic (399 aa).

The transit peptide at 1 to 64 (MALQTASMLP…RQKVGAVRAE (64 aa)) directs the protein to the chloroplast.

The protein belongs to the short-chain dehydrogenases/reductases (SDR) family. POR subfamily.

Its subcellular location is the plastid. It localises to the chloroplast. The enzyme catalyses chlorophyllide a + NADP(+) = protochlorophyllide a + NADPH + H(+). The protein operates within porphyrin-containing compound metabolism; chlorophyll biosynthesis. Functionally, phototransformation of protochlorophyllide (Pchlide) to chlorophyllide (Chlide). This is Protochlorophyllide reductase, chloroplastic (3PCR) from Pisum sativum (Garden pea).